A 134-amino-acid polypeptide reads, in one-letter code: Putative nickel-responsive regulator (134 aa).

Ni(2+)-binding residues include histidine 78, histidine 89, histidine 91, and cysteine 97.

The protein belongs to the transcriptional regulatory CopG/NikR family. Requires Ni(2+) as cofactor.

Its function is as follows. Transcriptional regulator. The sequence is that of Putative nickel-responsive regulator from Chlorobium phaeobacteroides (strain DSM 266 / SMG 266 / 2430).